The following is a 533-amino-acid chain: Aspartic proteinase sxa1 (533 aa).

Residues 1 to 23 form the signal peptide; sequence MKASFFVFAISALQALQASVASA. The Peptidase A1 domain occupies 76 to 434; the sequence is YFANLTLGSN…DWDAQKIGLA (359 aa). A glycan (N-linked (GlcNAc...) asparagine) is linked at asparagine 79. Aspartate 94 is a catalytic residue. N-linked (GlcNAc...) asparagine glycosylation is found at asparagine 106, asparagine 138, asparagine 153, asparagine 166, asparagine 271, asparagine 278, asparagine 299, and asparagine 319. Aspartate 325 is a catalytic residue. Asparagine 439 carries an N-linked (GlcNAc...) asparagine glycan.

This sequence belongs to the peptidase A1 family.

Its function is as follows. Involved in degradation or processing of the mating pheromones. Its loss may cause a persistent response to the pheromones. It may cleave the mating pheromone M-factor. May be involved in processing of zymogens that are required for zygote formation. The polypeptide is Aspartic proteinase sxa1 (sxa1) (Schizosaccharomyces pombe (strain 972 / ATCC 24843) (Fission yeast)).